We begin with the raw amino-acid sequence, 179 residues long: ATP synthase subunit delta (179 aa).

Belongs to the ATPase delta chain family. F-type ATPases have 2 components, F(1) - the catalytic core - and F(0) - the membrane proton channel. F(1) has five subunits: alpha(3), beta(3), gamma(1), delta(1), epsilon(1). F(0) has three main subunits: a(1), b(2) and c(10-14). The alpha and beta chains form an alternating ring which encloses part of the gamma chain. F(1) is attached to F(0) by a central stalk formed by the gamma and epsilon chains, while a peripheral stalk is formed by the delta and b chains.

The protein localises to the cell inner membrane. In terms of biological role, f(1)F(0) ATP synthase produces ATP from ADP in the presence of a proton or sodium gradient. F-type ATPases consist of two structural domains, F(1) containing the extramembraneous catalytic core and F(0) containing the membrane proton channel, linked together by a central stalk and a peripheral stalk. During catalysis, ATP synthesis in the catalytic domain of F(1) is coupled via a rotary mechanism of the central stalk subunits to proton translocation. Its function is as follows. This protein is part of the stalk that links CF(0) to CF(1). It either transmits conformational changes from CF(0) to CF(1) or is implicated in proton conduction. The sequence is that of ATP synthase subunit delta from Burkholderia thailandensis (strain ATCC 700388 / DSM 13276 / CCUG 48851 / CIP 106301 / E264).